Consider the following 208-residue polypeptide: Riboflavin synthase (208 aa).

2 Lumazine-binding repeats span residues 1 to 97 and 98 to 195; these read MFTG…MGGH and IISG…VDTT. 2,4-dihydroxypteridine is bound by residues 4 to 6, 48 to 50, 62 to 67, 101 to 103, K137, 146 to 148, and 160 to 165; these read GIV, CLT, DIMKIT, GHI, SLT, and SIIPET.

In terms of assembly, homotrimer.

The enzyme catalyses 2 6,7-dimethyl-8-(1-D-ribityl)lumazine + H(+) = 5-amino-6-(D-ribitylamino)uracil + riboflavin. It functions in the pathway cofactor biosynthesis; riboflavin biosynthesis; riboflavin from 2-hydroxy-3-oxobutyl phosphate and 5-amino-6-(D-ribitylamino)uracil: step 2/2. Functionally, catalyzes the dismutation of two molecules of 6,7-dimethyl-8-ribityllumazine, resulting in the formation of riboflavin and 5-amino-6-(D-ribitylamino)uracil. This is Riboflavin synthase (ribE) from Buchnera aphidicola subsp. Schizaphis graminum (strain Sg).